Reading from the N-terminus, the 217-residue chain is Deoxyribose-phosphate aldolase (217 aa).

Catalysis depends on Asp89, which acts as the Proton donor/acceptor. Lys151 serves as the catalytic Schiff-base intermediate with acetaldehyde. Lys180 acts as the Proton donor/acceptor in catalysis.

Belongs to the DeoC/FbaB aldolase family. DeoC type 1 subfamily.

It localises to the cytoplasm. The enzyme catalyses 2-deoxy-D-ribose 5-phosphate = D-glyceraldehyde 3-phosphate + acetaldehyde. The protein operates within carbohydrate degradation; 2-deoxy-D-ribose 1-phosphate degradation; D-glyceraldehyde 3-phosphate and acetaldehyde from 2-deoxy-alpha-D-ribose 1-phosphate: step 2/2. Its function is as follows. Catalyzes a reversible aldol reaction between acetaldehyde and D-glyceraldehyde 3-phosphate to generate 2-deoxy-D-ribose 5-phosphate. The sequence is that of Deoxyribose-phosphate aldolase from Mycoplasma mobile (strain ATCC 43663 / 163K / NCTC 11711) (Mesomycoplasma mobile).